A 162-amino-acid polypeptide reads, in one-letter code: Lipid droplet assembly factor 1-A (162 aa).

Residues 1-42 lie on the Cytoplasmic side of the membrane; it reads MASAENLYQEKMQELQKQMNKVMQTINNHSKVEAFLNSPFGQ. A helical membrane pass occupies residues 43-63; sequence YLDQHPFVTLSLLVFISLSAV. At 64-65 the chain is on the lumenal side; it reads PV. Residues 66-86 form a helical membrane-spanning segment; it reads GIFLTLIAGTAIAVCLAVLII. Position 87 (Glu-87) is a topological domain, cytoplasmic. Residues 88–108 form a helical membrane-spanning segment; the sequence is GIVISVGGIALLCILCGLAVM. Ser-109 is a topological domain (lumenal). Residues 110 to 130 form a helical membrane-spanning segment; that stretch reads LGVAAVLCVSYVAGSSVLNYI. Residues 131 to 162 are Cytoplasmic-facing; it reads HAYRVTVGTRGRSGPISLNHETTTAEKSYRSS.

The protein belongs to the LDAF1 family.

It is found in the endoplasmic reticulum membrane. Its subcellular location is the lipid droplet. Its function is as follows. Plays an important role in the formation of lipid droplets (LD) which are storage organelles at the center of lipid and energy homeostasis. The polypeptide is Lipid droplet assembly factor 1-A (Xenopus laevis (African clawed frog)).